A 357-amino-acid chain; its full sequence is RNA-binding protein 43 (357 aa).

An RRM domain is found at 15-104; it reads RTVVVAGLPV…VSLRVSHFGD (90 aa).

The protein is RNA-binding protein 43 (RBM43) of Homo sapiens (Human).